Reading from the N-terminus, the 438-residue chain is ATP-dependent RNA helicase SUB2 (438 aa).

Over residues 1 to 16 (MSHEEDLIDYSDEEIQ) the composition is skewed to acidic residues. Residues 1–41 (MSHEEDLIDYSDEEIQPTEVPANGDAAAAKGGLAAPDASGE) are disordered. The span at 21–38 (PANGDAAAAKGGLAAPDA) shows a compositional bias: low complexity. Residues 52-80 (TGFRDFLLKDELVRAITDCGFEHPSEVQQ) carry the Q motif motif. Positions 83–260 (IPQAILGNDV…KKFMQNPLEI (178 aa)) constitute a Helicase ATP-binding domain. ATP is bound at residue 96–103 (AKSGLGKT). A DEAD box motif is present at residues 207–210 (DECD). Positions 288–433 (KLNDLLDNLE…EFPEDGISSA (146 aa)) constitute a Helicase C-terminal domain.

This sequence belongs to the DEAD box helicase family. DECD subfamily.

It is found in the nucleus. It carries out the reaction ATP + H2O = ADP + phosphate + H(+). ATP-binding RNA helicase involved in transcription elongation and required for the export of mRNA out of the nucleus. SUB2 also plays a role in pre-mRNA splicing and spliceosome assembly. May be involved in rDNA and telomeric silencing, and maintenance of genome integrity. The sequence is that of ATP-dependent RNA helicase SUB2 (SUB2) from Phaeosphaeria nodorum (strain SN15 / ATCC MYA-4574 / FGSC 10173) (Glume blotch fungus).